The following is a 931-amino-acid chain: Scaffold attachment factor B1 (931 aa).

Low complexity predominate over residues 1 to 24 (MAETLSGLGDSGAASAAAVSSAAS). A disordered region spans residues 1–35 (MAETLSGLGDSGAASAAAVSSAASETGTRRLSDLR). Position 2 is an N-acetylalanine (A2). A phosphoserine mark is found at S24 and S55. An SAP domain is found at 31-65 (LSDLRVIDLRAELRKRNLTSSGNKSVLMERLKKAI). Positions 64–121 (AIEEEGGNPDEIEVISEGNKKMPKRPSKGKKPEDEGVEDNGLEENSGDGQEDVETSLE) are disordered. The segment covering 67–77 (EEGGNPDEIEV) has biased composition (acidic residues). S79 is modified (phosphoserine). The span at 98-118 (EGVEDNGLEENSGDGQEDVET) shows a compositional bias: acidic residues. Residues K171 and K185 each participate in a glycyl lysine isopeptide (Lys-Gly) (interchain with G-Cter in SUMO2) cross-link. Phosphoserine occurs at positions 194, 196, and 208. 2 disordered regions span residues 205 to 304 (EEAS…TRCQ) and 316 to 430 (KREP…GRNF). Residues 224–233 (CKSEPVKEEG) show a composition bias toward basic and acidic residues. A Glycyl lysine isopeptide (Lys-Gly) (interchain with G-Cter in SUMO) cross-link involves residue K230. The span at 267–287 (EEEEEEEEEEEQEEEQEEEGD) shows a compositional bias: acidic residues. Residue K316 forms a Glycyl lysine isopeptide (Lys-Gly) (interchain with G-Cter in SUMO) linkage. Residues 341–356 (EQSSTAAQLPETTSQE) are compositionally biased toward polar residues. Residues 368–380 (EPRDSKDDVKKFA) are compositionally biased toward basic and acidic residues. K403 is covalently cross-linked (Glycyl lysine isopeptide (Lys-Gly) (interchain with G-Cter in SUMO2)). A phosphoserine mark is found at S405 and S406. The segment covering 412–423 (DTKRLSREEKGR) has biased composition (basic and acidic residues). A Glycyl lysine isopeptide (Lys-Gly) (interchain with G-Cter in SUMO2) cross-link involves residue K414. In terms of domain architecture, RRM spans 428-506 (RNFWVSGLSS…KMISVEKAKS (79 aa)). Position 437 is a phosphoserine (S437). 2 stretches are compositionally biased toward basic and acidic residues: residues 500-573 (SVEK…ERSR) and 581-592 (GTERTVVMDKSK). 4 disordered regions span residues 500 to 663 (SVEK…WERE), 691 to 720 (RLER…LRRQ), 759 to 843 (RYHS…PRRD), and 872 to 931 (RWQG…QQTQ). Residues K505, K536, K565, and K592 each participate in a glycyl lysine isopeptide (Lys-Gly) (interchain with G-Cter in SUMO2) cross-link. The interval 550–816 (TDDGSTEKSK…RHGGPERHGR (267 aa)) is interaction with POLR2A; SFRS1; SFRS9 and SFRS10. K600 participates in a covalent cross-link: Glycyl lysine isopeptide (Lys-Gly) (interchain with G-Cter in SUMO1); alternate. A Glycyl lysine isopeptide (Lys-Gly) (interchain with G-Cter in SUMO2); alternate cross-link involves residue K600. 4 positions are modified to phosphoserine: S602, S604, S623, and S626. Over residues 603–663 (GSKERASKSQ…QRLQAQWERE (61 aa)) the composition is skewed to basic and acidic residues. The short motif at 621-638 (KRSVVSFDKVKESRKSRD) is the Nuclear localization signal element. Position 629 is an N6-acetyllysine (K629). Residues 759–820 (RYHSDFSRQD…PERHGRDSRD (62 aa)) show a composition bias toward basic and acidic residues. At R834 the chain carries Omega-N-methylarginine. Asymmetric dimethylarginine occurs at positions 892, 898, 908, and 914.

As to quaternary structure, monomer and homodimer. Interacts with KHDRBS3. Interacts with CLK2. Interacts with POLR2A, ASF/SRSF1, SRp30c/SRFS9 and TRA2B/SFRS10. Interacts with SRPK1 and inhibits its activity. Interacts with RBMX. Interacts with FUS. Interacts with ZBED4. Post-translationally, phosphorylated by CDC-like kinase 2 (CLK2). In terms of processing, sumoylated by PIAS1 with SUMO1 and SUMO2/3, desumoylated by SENP1. Sumoylation is required for transcriptional repressor activity.

It localises to the nucleus. Functionally, binds to scaffold/matrix attachment region (S/MAR) DNA and forms a molecular assembly point to allow the formation of a 'transcriptosomal' complex (consisting of SR proteins and RNA polymerase II) coupling transcription and RNA processing. Functions as an estrogen receptor corepressor and can also bind to the HSP27 promoter and decrease its transcription. Thereby acts as a negative regulator of cell proliferation. When associated with RBMX, binds to and stimulates transcription from the SREBF1 promoter. The polypeptide is Scaffold attachment factor B1 (Safb) (Rattus norvegicus (Rat)).